The primary structure comprises 132 residues: Small ribosomal subunit protein uS8 (132 aa).

Belongs to the universal ribosomal protein uS8 family. Part of the 30S ribosomal subunit. Contacts proteins S5 and S12.

In terms of biological role, one of the primary rRNA binding proteins, it binds directly to 16S rRNA central domain where it helps coordinate assembly of the platform of the 30S subunit. The polypeptide is Small ribosomal subunit protein uS8 (Pseudarthrobacter chlorophenolicus (strain ATCC 700700 / DSM 12829 / CIP 107037 / JCM 12360 / KCTC 9906 / NCIMB 13794 / A6) (Arthrobacter chlorophenolicus)).